Here is a 333-residue protein sequence, read N- to C-terminus: Probable tRNA pseudouridine synthase B (333 aa).

The active-site Nucleophile is the Asp-66. In terms of domain architecture, PUA spans 233–308; sequence LKKIIVKDSA…EVVEITRVIM (76 aa).

This sequence belongs to the pseudouridine synthase TruB family. Type 2 subfamily.

The enzyme catalyses uridine(55) in tRNA = pseudouridine(55) in tRNA. Could be responsible for synthesis of pseudouridine from uracil-55 in the psi GC loop of transfer RNAs. The polypeptide is Probable tRNA pseudouridine synthase B (Methanococcus maripaludis (strain C5 / ATCC BAA-1333)).